Consider the following 648-residue polypeptide: Biosynthetic arginine decarboxylase (648 aa).

N6-(pyridoxal phosphate)lysine is present on K109. 291–301 (LDVGGGLGVDY) contacts substrate.

This sequence belongs to the Orn/Lys/Arg decarboxylase class-II family. SpeA subfamily. The cofactor is Mg(2+). Requires pyridoxal 5'-phosphate as cofactor.

The catalysed reaction is L-arginine + H(+) = agmatine + CO2. Catalyzes the biosynthesis of agmatine from arginine. This chain is Biosynthetic arginine decarboxylase, found in Prochlorococcus marinus (strain MIT 9313).